We begin with the raw amino-acid sequence, 136 residues long: 2-hydroxyisobutanoyl-CoA mutase small subunit (136 aa).

One can recognise a B12-binding domain in the interval 5–133; sequence PIRVLLAKVG…DSIRSLVAAR (129 aa). Histidine 18 serves as a coordination point for adenosylcob(III)alamin.

It belongs to the acyl-CoA mutase small subunit family. Homotetramer composed of two large substrate-binding subunits (HcmA) and two small cobalamin-binding subunits (HcmB). The cofactor is adenosylcob(III)alamin.

The enzyme catalyses 2-hydroxyisobutanoyl-CoA = (3S)-3-hydroxybutanoyl-CoA. Its function is as follows. Together with HcmA, catalyzes the isomerization of 2-hydroxyisobutyryl-CoA and 3-hydroxybutyryl-CoA. Is specific for 2-hydroxyisobutyryl-CoA and (S)-3-hydroxybutyryl-CoA, and shows only very low activity with (R)-3-hydroxybutyryl-CoA, isobutyryl-CoA and butyryl-CoA. In vitro, can isomerize pivalyl-CoA and isovaleryl-CoA, with much lower efficiency. Plays a central role in the degradation of substrates bearing a tert-butyl moiety, such as the fuel oxygenate methyl tert-butyl ether (MTBE) and its metabolites. In Aquincola tertiaricarbonis, this protein is 2-hydroxyisobutanoyl-CoA mutase small subunit.